The following is a 195-amino-acid chain: Ureidoglycolate lyase (195 aa).

The protein belongs to the ureidoglycolate lyase family. Homodimer.

The enzyme catalyses (S)-ureidoglycolate = urea + glyoxylate. Its pathway is nitrogen metabolism; (S)-allantoin degradation. Catalyzes the catabolism of the allantoin degradation intermediate (S)-ureidoglycolate, generating urea and glyoxylate. Involved in the utilization of allantoin as secondary nitrogen source when primary sources are limiting. The sequence is that of Ureidoglycolate lyase (DAL3) from Saccharomyces cerevisiae (strain ATCC 204508 / S288c) (Baker's yeast).